Reading from the N-terminus, the 322-residue chain is Manganese-dependent ADP-ribose/CDP-alcohol diphosphatase (322 aa).

Residues Asp13, Gln15, Asp60, Asn96, His228, His265, and His267 each contribute to the Zn(2+) site.

Belongs to the ADPRibase-Mn family. Monomer. Mg(2+) is required as a cofactor.

The enzyme catalyses CDP-choline + H2O = phosphocholine + CMP + 2 H(+). The catalysed reaction is ADP-D-ribose + H2O = D-ribose 5-phosphate + AMP + 2 H(+). It catalyses the reaction CDP-glycerol + H2O = sn-glycerol 3-phosphate + CMP + 2 H(+). Its function is as follows. Hydrolyzes ADP-ribose, IDP-ribose, CDP-glycerol, CDP-choline and CDP-ethanolamine, but not other non-reducing ADP-sugars or CDP-glucose. This is Manganese-dependent ADP-ribose/CDP-alcohol diphosphatase (adprm) from Danio rerio (Zebrafish).